The primary structure comprises 254 residues: Ribonuclease PH (254 aa).

Phosphate contacts are provided by residues Arg86 and 124 to 126 (GTR).

It belongs to the RNase PH family. Homohexameric ring arranged as a trimer of dimers.

The catalysed reaction is tRNA(n+1) + phosphate = tRNA(n) + a ribonucleoside 5'-diphosphate. In terms of biological role, phosphorolytic 3'-5' exoribonuclease that plays an important role in tRNA 3'-end maturation. Removes nucleotide residues following the 3'-CCA terminus of tRNAs; can also add nucleotides to the ends of RNA molecules by using nucleoside diphosphates as substrates, but this may not be physiologically important. Probably plays a role in initiation of 16S rRNA degradation (leading to ribosome degradation) during starvation. This chain is Ribonuclease PH, found in Carboxydothermus hydrogenoformans (strain ATCC BAA-161 / DSM 6008 / Z-2901).